The chain runs to 542 residues: Neutral amino acid transporter B(0) (542 aa).

An N-acetylmethionine modification is found at Met1. The Cytoplasmic segment spans residues 1–52 (MVADPPRGDSKGLAAAEPTANGGLALASIEDQGEAAGGCCGSRDRVRRCLRA). A helical membrane pass occupies residues 53–82 (NLLVLLTVVAVVVGVALGLGVSGAGGALAL). Over 83 to 95 (GPERLSAFVFPGE) the chain is Extracellular. The chain crosses the membrane as a helical span at residues 96-117 (LLLRLLRMIILPLVVCSLIGGA). At 118–131 (ASLDPGALGRLGAW) the chain is on the cytoplasmic side. A helical transmembrane segment spans residues 132-154 (ALLFFLVTTLLASALGVALALAL). Residues 155 to 225 (QPGAASAAIN…GTRVKVPVGQ (71 aa)) are Extracellular-facing. 2 N-linked (GlcNAc...) asparagine glycosylation sites follow: Asn164 and Asn213. A helical membrane pass occupies residues 226-249 (EVEGMNILGLVVFAIVFGVALRKL). The Cytoplasmic segment spans residues 250 to 258 (GPEGELLIR). The chain crosses the membrane as a helical span at residues 259–286 (FFNSFNEATMVLVSWIMWYAPVGIMFLV). The Extracellular segment spans residues 287–307 (AGKIVEMEDVGLLFARLGKYI). A helical membrane pass occupies residues 308 to 329 (LCCLLGHAIHGLLVLPLIYFLF). At 330–334 (TRKNP) the chain is on the cytoplasmic side. The discontinuously helical intramembrane region spans 335-365 (YRFLWGIVTPLATAFGTSSSSATLPLMMKCV). At 366 to 374 (EENNGVAKH) the chain is on the cytoplasmic side. A helical transmembrane segment spans residues 375-401 (ISRFILPIGATVNMDGAALFQCVAAVF). The Na(+) site is built by Gly383, Thr385, and Asn387. Residues 402-414 (IAQLSEQSLDFVK) are Extracellular-facing. The segment at residues 415–448 (IITILVTATASSVGAAGIPAGGVLTLAIILEAVN) is an intramembrane region (discontinuously helical). The Extracellular portion of the chain corresponds to 449–461 (LPVDHISLILAVD). Residues 462-483 (WLVDRSCTVLNVEGDALGAGLL) traverse the membrane as a helical segment. Positions 472 and 476 each coordinate Na(+). The Cytoplasmic segment spans residues 484–542 (QNYVDRTEVRSTEPELIQVKSELPLDPLPAPTEEGNPLLRHYRGPAGDATVASEKESVM). Phosphoserine is present on Ser494. A Phosphothreonine modification is found at Thr495. Phosphoserine is present on residues Ser504, Ser536, and Ser540. Residues 509–542 (DPLPAPTEEGNPLLRHYRGPAGDATVASEKESVM) form a disordered region.

Belongs to the dicarboxylate/amino acid:cation symporter (DAACS) (TC 2.A.23) family. SLC1A5 subfamily. In terms of assembly, homotrimer.

The protein localises to the cell membrane. Its subcellular location is the melanosome. The catalysed reaction is L-glutamine(out) + L-serine(in) + Na(+)(out) = L-glutamine(in) + L-serine(out) + Na(+)(in). It carries out the reaction L-glutamine(in) + L-serine(out) + Na(+)(out) = L-glutamine(out) + L-serine(in) + Na(+)(in). The enzyme catalyses L-threonine(in) + L-glutamine(out) + Na(+)(out) = L-threonine(out) + L-glutamine(in) + Na(+)(in). It catalyses the reaction L-threonine(out) + L-glutamine(in) + Na(+)(out) = L-threonine(in) + L-glutamine(out) + Na(+)(in). The catalysed reaction is L-asparagine(in) + L-glutamine(out) + Na(+)(out) = L-asparagine(out) + L-glutamine(in) + Na(+)(in). It carries out the reaction L-asparagine(out) + L-glutamine(in) + Na(+)(out) = L-asparagine(in) + L-glutamine(out) + Na(+)(in). The enzyme catalyses L-glutamine(in) + L-alanine(out) + Na(+)(out) = L-glutamine(out) + L-alanine(in) + Na(+)(in). It catalyses the reaction L-valine(out) + L-glutamine(in) + Na(+)(out) = L-valine(in) + L-glutamine(out) + Na(+)(in). The catalysed reaction is L-glutamine(in) + L-methionine(out) + Na(+)(out) = L-glutamine(out) + L-methionine(in) + Na(+)(in). It carries out the reaction L-glutamine(in) + L-glutamate(out) + Na(+)(out) + H(+)(out) = L-glutamine(out) + L-glutamate(in) + Na(+)(in) + H(+)(in). The enzyme catalyses D-serine(in) + L-glutamine(out) + Na(+)(out) = D-serine(out) + L-glutamine(in) + Na(+)(in). It catalyses the reaction D-serine(in) + L-alanine(out) + Na(+)(out) = D-serine(out) + L-alanine(in) + Na(+)(in). The catalysed reaction is nitrate(in) = nitrate(out). It carries out the reaction iodide(out) = iodide(in). The enzyme catalyses thiocyanate(in) = thiocyanate(out). Its function is as follows. Sodium-coupled antiporter of neutral amino acids. In a tri-substrate transport cycle, exchanges neutral amino acids between the extracellular and intracellular compartments, coupled to the inward cotransport of at least one sodium ion. The preferred substrate is the essential amino acid L-glutamine, a precursor for biosynthesis of proteins, nucleotides and amine sugars as well as an alternative fuel for mitochondrial oxidative phosphorylation. Exchanges L-glutamine with other neutral amino acids such as L-serine, L-threonine and L-asparagine in a bidirectional way. Provides L-glutamine to proliferating stem and activated cells driving the metabolic switch toward cell differentiation. The transport cycle is usually pH-independent, with the exception of L-glutamate. Transports extracellular L-glutamate coupled to the cotransport of one proton and one sodium ion in exchange for intracellular L-glutamine counter-ion. May provide for L-glutamate uptake in glial cells regulating glutamine/glutamate cycle in the nervous system. Can transport D-amino acids. Mediates D-serine release from the retinal glia potentially affecting NMDA receptor function in retinal neurons. Displays sodium- and amino acid-dependent but uncoupled channel-like anion conductance with a preference SCN(-) &gt;&gt; NO3(-) &gt; I(-) &gt; Cl(-). Through binding of the fusogenic protein syncytin-1/ERVW-1 may mediate trophoblasts syncytialization, the spontaneous fusion of their plasma membranes, an essential process in placental development. This chain is Neutral amino acid transporter B(0) (SLC1A5), found in Macaca fascicularis (Crab-eating macaque).